A 50-amino-acid chain; its full sequence is Toxic protein HokE (50 aa).

The helical transmembrane segment at Tyr-5–Gly-25 threads the bilayer.

Belongs to the Hok/Gef family.

The protein resides in the cell inner membrane. Its function is as follows. Toxic component of a type I toxin-antitoxin (TA) system; if it expressed it could be neutralized by antisense antitoxin RNA SokE. This is Toxic protein HokE from Escherichia coli (strain K12).